The following is a 408-amino-acid chain: Probable fructose-2,6-bisphosphatase C732.02c (408 aa).

ATP is bound at residue 16 to 24 (GLPASGKTS). Aspartate 88 is a catalytic residue. 127–132 (NITDMC) is a binding site for ATP. Residue tyrosine 157 participates in beta-D-fructose 6-phosphate binding. Arginine 213 serves as a coordination point for beta-D-fructose 2,6-bisphosphate. Residue histidine 214 is the Tele-phosphohistidine intermediate of the active site. Residues asparagine 220 and glycine 226 each contribute to the beta-D-fructose 2,6-bisphosphate site. The active-site Proton donor/acceptor is the glutamate 285. Beta-D-fructose 2,6-bisphosphate-binding residues include tyrosine 296, arginine 310, lysine 314, tyrosine 325, glutamine 351, and arginine 355. Position 307-310 (307-310 (AELR)) interacts with ATP. ATP is bound by residues 351-355 (QAILR) and tyrosine 387.

The protein in the C-terminal section; belongs to the phosphoglycerate mutase family.

The catalysed reaction is beta-D-fructose 2,6-bisphosphate + H2O = beta-D-fructose 6-phosphate + phosphate. In terms of biological role, this is predominantly if not solely a fructose-2,6-bisphosphatase. This chain is Probable fructose-2,6-bisphosphatase C732.02c, found in Schizosaccharomyces pombe (strain 972 / ATCC 24843) (Fission yeast).